The following is a 268-amino-acid chain: Ribosomal RNA small subunit methyltransferase A (268 aa).

The S-adenosyl-L-methionine site is built by asparagine 18, leucine 20, glycine 45, glutamate 66, aspartate 91, and asparagine 112.

Belongs to the class I-like SAM-binding methyltransferase superfamily. rRNA adenine N(6)-methyltransferase family. RsmA subfamily.

It localises to the cytoplasm. It carries out the reaction adenosine(1518)/adenosine(1519) in 16S rRNA + 4 S-adenosyl-L-methionine = N(6)-dimethyladenosine(1518)/N(6)-dimethyladenosine(1519) in 16S rRNA + 4 S-adenosyl-L-homocysteine + 4 H(+). Functionally, specifically dimethylates two adjacent adenosines (A1518 and A1519) in the loop of a conserved hairpin near the 3'-end of 16S rRNA in the 30S particle. May play a critical role in biogenesis of 30S subunits. The chain is Ribosomal RNA small subunit methyltransferase A from Shewanella baltica (strain OS223).